The following is a 249-amino-acid chain: Tetraspanin-7 (249 aa).

The Cytoplasmic portion of the chain corresponds to 1–16; it reads MASRRMETKPVITCLK. Residues 17–40 form a helical membrane-spanning segment; sequence TLLIIYSFVFWITGVILLAVGVWG. Residues 41-56 lie on the Extracellular side of the membrane; it reads KLTLGTYISLIAENST. An N-linked (GlcNAc...) asparagine glycan is attached at asparagine 54. A helical membrane pass occupies residues 57-75; sequence NAPYVLIGTGTTIVVFGLF. The Cytoplasmic segment spans residues 76-86; that stretch reads GCFATCRGSPW. A helical transmembrane segment spans residues 87-112; it reads MLKLYAMFLSLVFLAELVAGISGFVF. Over 113–213 the chain is Extracellular; sequence RHEIKDTFLR…LVTSFMETNM (101 aa). Asparagine 155, asparagine 158, asparagine 177, and asparagine 188 each carry an N-linked (GlcNAc...) asparagine glycan. Residues 214-234 traverse the membrane as a helical segment; that stretch reads GIIAGVAFGIAFSQLIGMLLA. Over 235 to 249 the chain is Cytoplasmic; it reads CCLSRFITANQYEMV.

Belongs to the tetraspanin (TM4SF) family. In terms of assembly, (Microbial infection) Interacts with herpes simplex virus 1 (HHV-1) UL35. Not solely expressed in T-cells. Expressed in acute myelocytic leukemia cells of some patients.

The protein resides in the membrane. Its function is as follows. May be involved in cell proliferation and cell motility. In Homo sapiens (Human), this protein is Tetraspanin-7 (TSPAN7).